We begin with the raw amino-acid sequence, 595 residues long: NADH-quinone oxidoreductase subunit C/D (595 aa).

Residues 1-186 (MVTDNSKATD…TPYFLNNAKQ (186 aa)) are NADH dehydrogenase I subunit C. The interval 210 to 595 (DFMFLNLGPN…IDIVMADTDR (386 aa)) is NADH dehydrogenase I subunit D.

The protein in the N-terminal section; belongs to the complex I 30 kDa subunit family. This sequence in the C-terminal section; belongs to the complex I 49 kDa subunit family. NDH-1 is composed of 13 different subunits. Subunits NuoB, CD, E, F, and G constitute the peripheral sector of the complex.

It is found in the cell inner membrane. The enzyme catalyses a quinone + NADH + 5 H(+)(in) = a quinol + NAD(+) + 4 H(+)(out). Functionally, NDH-1 shuttles electrons from NADH, via FMN and iron-sulfur (Fe-S) centers, to quinones in the respiratory chain. The immediate electron acceptor for the enzyme in this species is believed to be ubiquinone. Couples the redox reaction to proton translocation (for every two electrons transferred, four hydrogen ions are translocated across the cytoplasmic membrane), and thus conserves the redox energy in a proton gradient. The polypeptide is NADH-quinone oxidoreductase subunit C/D (Psychrobacter sp. (strain PRwf-1)).